We begin with the raw amino-acid sequence, 1362 residues long: Bromodomain-containing protein 4 (1362 aa).

Positions 1-58 (MSAESGPGTRLRNLPVMGDGLETSQMSTTQAQAQPQPANAASTNPPPPETSNPNKPKR) are disordered. Positions 23-43 (TSQMSTTQAQAQPQPANAAST) are enriched in low complexity. The region spanning 58–164 (RQTNQLQYLL…KLFLQKINEL (107 aa)) is the Bromo 1 domain. Lys99 is covalently cross-linked (Glycyl lysine isopeptide (Lys-Gly) (interchain with G-Cter in SUMO2)). Disordered regions lie at residues 174 to 229 (VQAK…PAVT), 242 to 352 (VPPQ…KVSE), and 463 to 615 (EPVV…YEEK). The span at 197–211 (PNTTQASTPPQTQTP) shows a compositional bias: low complexity. Composition is skewed to pro residues over residues 212–227 (QPNP…PFPA) and 243–266 (PPQP…PAPQ). Over residues 320–336 (QRRESSRPVKPPKKDVP) the composition is skewed to basic and acidic residues. Residues 348 to 457 (SKVSEQLKCC…DVFEMRFAKM (110 aa)) enclose the Bromo 2 domain. Ser470 is modified (phosphoserine). Positions 478–497 (KVVAPPSSSDSSSDSSSDSD) are enriched in low complexity. Phosphoserine; by CK2 occurs at positions 484, 488, 492, 494, 498, 499, and 503. The tract at residues 484–503 (SSSDSSSDSSSDSDSSTDDS) is NPS region. The BID region stretch occupies residues 524–579 (QLAALSQPQQNKPKKKEKDKKEKKKEKHKRKEEVEENKKSKAKEPPPKKTKKNNSS). A compositionally biased stretch (basic residues) spans 535–553 (KPKKKEKDKKEKKKEKHKR). A compositionally biased stretch (basic and acidic residues) spans 554–570 (KEEVEENKKSKAKEPPP). Residue Lys585 forms a Glycyl lysine isopeptide (Lys-Gly) (interchain with G-Cter in SUMO2) linkage. In terms of domain architecture, NET spans 600-682 (ESEEEDKCKP…SCLRKKRKPQ (83 aa)). Residue Ser601 is modified to Phosphoserine. Residues 605-615 (DKCKPMSYEEK) show a composition bias toward basic and acidic residues. Glycyl lysine isopeptide (Lys-Gly) (interchain with G-Cter in SUMO2) cross-links involve residues Lys645 and Lys694. The tract at residues 674–1100 (CLRKKRKPQA…PKKQELRAAS (427 aa)) is disordered. Over residues 699–712 (SSSESESSSESSSS) the composition is skewed to low complexity. A compositionally biased stretch (basic residues) spans 724 to 744 (KSKKKGHPGREQKKHHHHHHQ). Composition is skewed to pro residues over residues 751–785 (APVP…PPSM), 833–846 (PELP…PEHS), and 881–890 (PPKPARPPAV). The span at 926 to 936 (MQMQLYLQQLQ) shows a compositional bias: low complexity. 3 stretches are compositionally biased toward pro residues: residues 953-964 (QPPPPLPPPPHP), 973-996 (QPPP…PPRP), and 1010-1034 (QPPP…PQPA). Over residues 1041–1050 (QHHHSPRHHK) the composition is skewed to basic residues. The C-terminal (CTD) region stretch occupies residues 1047-1362 (RHHKSDPYST…LLSIFEENLF (316 aa)). Residue Lys1050 forms a Glycyl lysine isopeptide (Lys-Gly) (interchain with G-Cter in SUMO2) linkage. Residues 1071–1091 (PQMSQFQSLTHQSPPQQNVQP) show a composition bias toward polar residues. N6-acetyllysine; alternate is present on Lys1111. Lys1111 is covalently cross-linked (Glycyl lysine isopeptide (Lys-Gly) (interchain with G-Cter in SUMO1); alternate). Lys1111 is covalently cross-linked (Glycyl lysine isopeptide (Lys-Gly) (interchain with G-Cter in SUMO2); alternate). Residues 1116–1339 (HSPIIRSEPF…KREQERRRRE (224 aa)) are disordered. Phosphoserine occurs at positions 1117 and 1126. Residues 1175 to 1196 (PDKDKQKQEPKTPVAPKKDLKI) show a composition bias toward basic and acidic residues. Residue Lys1197 forms a Glycyl lysine isopeptide (Lys-Gly) (interchain with G-Cter in SUMO2) linkage. A phosphoserine mark is found at Ser1201 and Ser1204. The span at 1211-1223 (TTPSSTAKSSSDS) shows a compositional bias: low complexity. Positions 1225 to 1284 (EQFRRAAREKEEREKALKAQAEHAEKEKERLRQERMRSREDEDALEQARRAHEEARRRQE) are enriched in basic and acidic residues. Positions 1285–1313 (QQQQQRQEQQQQQQQQAAAVAAAATPQAQ) are enriched in low complexity. Basic and acidic residues predominate over residues 1323-1339 (QQRELARKREQERRRRE).

This sequence belongs to the BET family. As to quaternary structure, interacts with p53/TP53; the interaction is direct. Interacts (via CTD region) with CDK9 and CCNT1, acting as an associated component of P-TEFb complex. Interacts with RELA (when acetylated at 'Lys-310'). Interacts (via NET domain) with NSD3, CHD4, BICRA and ATAD5. The interaction with BICRA bridges BRD4 to the GBAF complex. Interacts (via NET domain) with JMJD6 (via JmjC and N-terminal domains); the interaction is stronger in presence of ssRNA and recruits JMJD6 on distal enhancers. Interacts with NSD3. Interacts with NIPBL. Interacts with SMC2. Interacts with NCAPD3. In terms of assembly, (Microbial infection) Interacts with bovine papillomavirus type 1 regulatory protein E2. This interactions may serve for the tethering of viral genomes to host mitotic chromosomes allowing successful partitioning of the viral genome during cell division. As to quaternary structure, (Microbial infection) Interacts with Epstein-Barr virus (EBV) protein EBNA1; this interaction facilitates transcriptional activation by EBNA1. (Microbial infection) Interacts with human herpes virus-8 (HHV-8) protein LANA. Post-translationally, phosphorylation by CK2 disrupt the intramolecular binding between the bromo domain 2 and the NPS region and promotes binding between the NPS and the BID regions, leading to activate the protein and promote binding to acetylated histones. In absence of phosphorylation, BRD4 does not localize to p53/TP53 target gene promoters, phosphorylation promoting recruitment to p53/TP53 target promoters. Ubiquitously expressed.

It localises to the nucleus. It is found in the chromosome. Its activity is regulated as follows. Inhibited by JQ1, a thieno-triazolo-1,4-diazepine derivative, which specifically inhibits members of the BET family (BRD2, BRD3 and BRD4). The first bromo domain is inhibited by GSK778 (iBET-BD1), which specifically inhibits the first bromo domain of members of the BET family (BRD2, BRD3 and BRD4). The second bromo domain is inhibited by ABBV-744, which specifically inhibits the second bromo domain of members of the BET family (BRD2, BRD3 and BRD4). The second bromo domain is inhibited by GSK046 (iBET-BD2), which specifically inhibits the second bromo domain of members of the BET family (BRD2, BRD3 and BRD4). Chromatin reader protein that recognizes and binds acetylated histones and plays a key role in transmission of epigenetic memory across cell divisions and transcription regulation. Remains associated with acetylated chromatin throughout the entire cell cycle and provides epigenetic memory for postmitotic G1 gene transcription by preserving acetylated chromatin status and maintaining high-order chromatin structure. During interphase, plays a key role in regulating the transcription of signal-inducible genes by associating with the P-TEFb complex and recruiting it to promoters. Also recruits P-TEFb complex to distal enhancers, so called anti-pause enhancers in collaboration with JMJD6. BRD4 and JMJD6 are required to form the transcriptionally active P-TEFb complex by displacing negative regulators such as HEXIM1 and 7SKsnRNA complex from P-TEFb, thereby transforming it into an active form that can then phosphorylate the C-terminal domain (CTD) of RNA polymerase II. Regulates differentiation of naive CD4(+) T-cells into T-helper Th17 by promoting recruitment of P-TEFb to promoters. Promotes phosphorylation of 'Ser-2' of the C-terminal domain (CTD) of RNA polymerase II. According to a report, directly acts as an atypical protein kinase and mediates phosphorylation of 'Ser-2' of the C-terminal domain (CTD) of RNA polymerase II; these data however need additional evidences in vivo. In addition to acetylated histones, also recognizes and binds acetylated RELA, leading to further recruitment of the P-TEFb complex and subsequent activation of NF-kappa-B. Also acts as a regulator of p53/TP53-mediated transcription: following phosphorylation by CK2, recruited to p53/TP53 specific target promoters. Functionally, acts as a chromatin insulator in the DNA damage response pathway. Inhibits DNA damage response signaling by recruiting the condensin-2 complex to acetylated histones, leading to chromatin structure remodeling, insulating the region from DNA damage response by limiting spreading of histone H2AX/H2A.x phosphorylation. The polypeptide is Bromodomain-containing protein 4 (BRD4) (Homo sapiens (Human)).